The sequence spans 936 residues: Protein translocase subunit SecA (936 aa).

Residues Q87, 105 to 109, and D515 each bind ATP; that span reads GEGKT. Positions 920, 922, 931, and 932 each coordinate Zn(2+).

Belongs to the SecA family. In terms of assembly, monomer and homodimer. Part of the essential Sec protein translocation apparatus which comprises SecA, SecYEG and auxiliary proteins SecDF-YajC and YidC. Zn(2+) serves as cofactor.

The protein localises to the cell inner membrane. It localises to the cytoplasm. It catalyses the reaction ATP + H2O + cellular proteinSide 1 = ADP + phosphate + cellular proteinSide 2.. Part of the Sec protein translocase complex. Interacts with the SecYEG preprotein conducting channel. Has a central role in coupling the hydrolysis of ATP to the transfer of proteins into and across the cell membrane, serving both as a receptor for the preprotein-SecB complex and as an ATP-driven molecular motor driving the stepwise translocation of polypeptide chains across the membrane. The sequence is that of Protein translocase subunit SecA from Paraburkholderia xenovorans (strain LB400).